The chain runs to 492 residues: Excitatory amino acid transporter (492 aa).

Residues 1-7 are Cytoplasmic-facing; the sequence is MVSWIRK. The next 3 helical transmembrane spans lie at 8-28, 47-67, and 85-105; these read NLLL…GFLL, LLMH…LISG, and TYYM…VLVI. Topologically, residues 106–191 are extracellular; it reads HPGDPTIKKE…VKASVEYTSG (86 aa). N-linked (GlcNAc...) asparagine glycans are attached at residues Asn-166 and Asn-176. The next 5 membrane-spanning stretches (helical) occupy residues 192-212, 228-248, 270-290, 358-378, and 389-409; these read MNVL…SQLG, VIMK…LCLI, VTVL…IFFV, AVAA…GQVV, and IGAA…LTAV.

Belongs to the dicarboxylate/amino acid:cation symporter (DAACS) (TC 2.A.23) family.

The protein localises to the membrane. Transports L-glutamate and also L- and D-aspartate. Essential for terminating the postsynaptic action of glutamate by rapidly removing released glutamate from the synaptic cleft. Acts as a symport by cotransporting sodium. The chain is Excitatory amino acid transporter (GLT-1) from Onchocerca volvulus.